Consider the following 490-residue polypeptide: Cruciferin BnC1 (490 aa).

The N-terminal stretch at 1-23 (MARLSSLLSFSLALLIFLHGSTA) is a signal peptide. 2 disulfides stabilise this stretch: C30-C63 and C106-C307. Cupin type-1 domains lie at 35-263 (LNAL…RTAQ) and 313-462 (DNLD…EEAR). At T109 the chain carries Phosphothreonine. The interval 113–164 (SSVFQPSGGSPSGEGQGQGQQGQGQGHQGQGQGQQGQQGQQGQQSQGQGFRD) is disordered. The span at 122–148 (SPSGEGQGQGQQGQGQGHQGQGQGQQG) shows a compositional bias: gly residues. Positions 149 to 161 (QQGQQGQQSQGQG) are enriched in low complexity. Y330 bears the Phosphotyrosine mark. S332 bears the Phosphoserine mark. T426 carries the post-translational modification Phosphothreonine.

It belongs to the 11S seed storage protein (globulins) family. As to quaternary structure, hexamer; each subunit is composed of an acidic and a basic chain derived from a single precursor and linked by a disulfide bond.

In terms of biological role, this is a seed storage protein. This Brassica napus (Rape) protein is Cruciferin BnC1 (BnC1).